The primary structure comprises 273 residues: Acetyl-coenzyme A carboxylase carboxyl transferase subunit alpha (273 aa).

The CoA carboxyltransferase C-terminal domain occupies 1–244 (MKKATQSKAW…KVVLKQALDE (244 aa)).

The protein belongs to the AccA family. Acetyl-CoA carboxylase is a heterohexamer composed of biotin carboxyl carrier protein (AccB), biotin carboxylase (AccC) and two subunits each of ACCase subunit alpha (AccA) and ACCase subunit beta (AccD).

It localises to the cytoplasm. It catalyses the reaction N(6)-carboxybiotinyl-L-lysyl-[protein] + acetyl-CoA = N(6)-biotinyl-L-lysyl-[protein] + malonyl-CoA. Its pathway is lipid metabolism; malonyl-CoA biosynthesis; malonyl-CoA from acetyl-CoA: step 1/1. Functionally, component of the acetyl coenzyme A carboxylase (ACC) complex. First, biotin carboxylase catalyzes the carboxylation of biotin on its carrier protein (BCCP) and then the CO(2) group is transferred by the carboxyltransferase to acetyl-CoA to form malonyl-CoA. This is Acetyl-coenzyme A carboxylase carboxyl transferase subunit alpha from Acinetobacter baumannii (strain ACICU).